Consider the following 393-residue polypeptide: uncharacterized protein (393 aa).

This sequence belongs to the Gfo/Idh/MocA family.

This is an uncharacterized protein from Bacillus subtilis (strain 168).